The sequence spans 424 residues: MDKLRMTGGTPLNGEVTIAGAKNAALPILCACLLTDQPVVLRNLPDLQDVRTMLKLLQEIGVVVSFPDANNPNHVILNAAVIKSSEATYEMVKTMRASILVLGPLLARMHSAKVSLPGGCAIGARPVDQHIKGLKAMGASIKIKSGYIQAETKPTTERLKGASILTDMITVTGTENLLMAATLASGTTILENAAREPEVGDLAELLVKMGAKITGIGSDRLVIEGVEKLHGAEHSVIPDRIEAGTFLCAVAAAGGEVLVKHCRPDTLDAVIVKLKEAGLKMEIGPDWIKASMQGRPKAVSFRTSEYPAFPTDMQAQLMAVNAVANGNSTITETIFENRFMHVQELNRLGADIAIEGNTAIAQGVERLSGAIVMATDLRASASLVIAGLAAQGETQVDRIYHLDRGYDRMEQKLTRLGANIERIK.

Position 22–23 (22–23 (KN)) interacts with phosphoenolpyruvate. A UDP-N-acetyl-alpha-D-glucosamine-binding site is contributed by Arg-96. The active-site Proton donor is Cys-120. Cys-120 is modified (2-(S-cysteinyl)pyruvic acid O-phosphothioketal). Residues 125–129 (RPVDQ), Asp-312, and Ile-334 each bind UDP-N-acetyl-alpha-D-glucosamine.

Belongs to the EPSP synthase family. MurA subfamily.

Its subcellular location is the cytoplasm. It catalyses the reaction phosphoenolpyruvate + UDP-N-acetyl-alpha-D-glucosamine = UDP-N-acetyl-3-O-(1-carboxyvinyl)-alpha-D-glucosamine + phosphate. Its pathway is cell wall biogenesis; peptidoglycan biosynthesis. Functionally, cell wall formation. Adds enolpyruvyl to UDP-N-acetylglucosamine. This Polynucleobacter asymbioticus (strain DSM 18221 / CIP 109841 / QLW-P1DMWA-1) (Polynucleobacter necessarius subsp. asymbioticus) protein is UDP-N-acetylglucosamine 1-carboxyvinyltransferase.